The following is a 96-amino-acid chain: Small ribosomal subunit protein bS6 (96 aa).

The protein belongs to the bacterial ribosomal protein bS6 family.

Binds together with bS18 to 16S ribosomal RNA. The chain is Small ribosomal subunit protein bS6 from Streptococcus equi subsp. equi (strain 4047).